We begin with the raw amino-acid sequence, 294 residues long: uncharacterized protein (294 aa).

This is an uncharacterized protein from Bacillus subtilis (strain 168).